Here is a 652-residue protein sequence, read N- to C-terminus: Bifunctional protein ThiO/ThiG (652 aa).

Positions 1-366 are thiO; it reads MTRDIVIIGG…HYSRFQKQAS (366 aa). FAD-binding positions include 5 to 19 and 44 to 46; these read IVII…AIAV and AGM. Position 52 (E52) interacts with glycine. V173 contacts FAD. Residues R301 and R327 each contribute to the glycine site. 325 to 331 serves as a coordination point for FAD; the sequence is HYRNGIL. Residues 393 to 652 form a thiG region; that stretch reads SLIIAGKSFH…ASSPVTGTIS (260 aa). Residue K494 is the Schiff-base intermediate with DXP of the active site. 1-deoxy-D-xylulose 5-phosphate is bound by residues G555, 581–582, and 603–604; these read AG and NS.

This sequence in the N-terminal section; belongs to the DAO family. ThiO subfamily. In the C-terminal section; belongs to the ThiG family. In terms of assembly, interacts with ThiH and ThiS. Requires FAD as cofactor.

It is found in the cytoplasm. It catalyses the reaction glycine + O2 + H2O = glyoxylate + H2O2 + NH4(+). It carries out the reaction [ThiS sulfur-carrier protein]-C-terminal-Gly-aminoethanethioate + 2-iminoacetate + 1-deoxy-D-xylulose 5-phosphate = [ThiS sulfur-carrier protein]-C-terminal Gly-Gly + 2-[(2R,5Z)-2-carboxy-4-methylthiazol-5(2H)-ylidene]ethyl phosphate + 2 H2O + H(+). The protein operates within cofactor biosynthesis; thiamine diphosphate biosynthesis. Catalyzes the FAD-dependent oxidative deamination of glycine. Is essential for thiamine biosynthesis since the oxidation of glycine catalyzed by ThiO generates the glycine imine intermediate (dehydroglycine) required for the biosynthesis of the thiazole ring of thiamine pyrophosphate. In terms of biological role, catalyzes the rearrangement of 1-deoxy-D-xylulose 5-phosphate (DXP) to produce the thiazole phosphate moiety of thiamine. Sulfur is provided by the thiocarboxylate moiety of the carrier protein ThiS. In vitro, sulfur can be provided by H(2)S. This chain is Bifunctional protein ThiO/ThiG (thiO/thiG), found in Trichormus variabilis (strain ATCC 29413 / PCC 7937) (Anabaena variabilis).